The following is a 749-amino-acid chain: Poly(U)-binding-splicing factor rnp-6 (749 aa).

2 consecutive RRM domains span residues 102-176 (SRIY…LKVN) and 207-285 (FRVY…KCVT). Disordered regions lie at residues 323-388 (AGSS…PDVV) and 457-480 (IEEEEEARTERVKLSTSQRKKMKR). The segment covering 330 to 354 (PSESGGSRAASPAPRAQSPATPSSS) has biased composition (low complexity). The 82-residue stretch at 658–739 (NVIVLRNMVT…NTVKAEAYDQ (82 aa)) folds into the RRM 3; atypical domain.

Belongs to the RRM half pint family.

The protein resides in the nucleus. Its function is as follows. DNA- and RNA-binding protein, involved in several nuclear processes such as pre-mRNA splicing, apoptosis and transcription regulation. Ensures the correct splicing of genes involved in immunity to promote longevity in response to infection by pathogenic bacteria such as S.aureus. The sequence is that of Poly(U)-binding-splicing factor rnp-6 from Caenorhabditis elegans.